Here is a 107-residue protein sequence, read N- to C-terminus: MCDRDDCASIASRCTGETIICAFVESITPPKIRDKTGTYELKCPFAEGFTMEIGDLFLFHFVFDGSSEKCTRLTPIPKMLAMVYEKLLKDLRKAKKEGKMIISPTAN.

It belongs to the RMI2 family. As to quaternary structure, component of the RMI complex, containing at least top-3, rmh-1 and rmh-2. Component of the BTR double Holliday Junction dissolution complex composed of at least him-6, top-3, rmh-1 and rmif-2, which is involved in double strand break repair in the germline. Interacts with rmh-1; the interaction is direct and is required for mutual stability and localization at nuclear foci. As to expression, expressed in the germline.

Its subcellular location is the nucleus. Its function is as follows. Essential component of the RMI complex, a complex that plays an important role in the processing of homologous recombination intermediates. Component of the BTR double Holliday Junction dissolution complex, which is involved in homologous recombination during meiotic double strand break in the germline. Plays a role in double strand break repair by positively regulating the accumulation of rad-51 at double strand breaks. Stabilizes and positively regulates the localization of the BTR double Holliday Junction dissolution complex components rmh-1, him-6 and top-3 at nuclear foci during meiotic recombination. Positively regulates meiotic recombination, chiasma formation, and chromosome segregation in meiosis. Positively regulates DNA crossover formation and positioning on chromosome arms (away from the chromosome center) during homologous recombination. The protein is RecQ-mediated genome instability protein 2 homolog of Caenorhabditis elegans.